The primary structure comprises 143 residues: SsrA-binding protein (143 aa).

The protein belongs to the SmpB family.

It localises to the cytoplasm. Functionally, required for rescue of stalled ribosomes mediated by trans-translation. Binds to transfer-messenger RNA (tmRNA), required for stable association of tmRNA with ribosomes. tmRNA and SmpB together mimic tRNA shape, replacing the anticodon stem-loop with SmpB. tmRNA is encoded by the ssrA gene; the 2 termini fold to resemble tRNA(Ala) and it encodes a 'tag peptide', a short internal open reading frame. During trans-translation Ala-aminoacylated tmRNA acts like a tRNA, entering the A-site of stalled ribosomes, displacing the stalled mRNA. The ribosome then switches to translate the ORF on the tmRNA; the nascent peptide is terminated with the 'tag peptide' encoded by the tmRNA and targeted for degradation. The ribosome is freed to recommence translation, which seems to be the essential function of trans-translation. In Mycoplasmoides gallisepticum (strain R(low / passage 15 / clone 2)) (Mycoplasma gallisepticum), this protein is SsrA-binding protein.